The sequence spans 846 residues: Protein kintoun (846 aa).

4 disordered regions span residues 216-240 (TAEE…GKPE), 372-405 (LRHF…DSKA), 574-631 (QALK…ESAC), and 762-846 (KKNQ…EMDD). Residues 372–382 (LRHFSREDSGV) are compositionally biased toward basic and acidic residues. The residue at position 380 (serine 380) is a Phosphoserine. A compositionally biased stretch (acidic residues) spans 391–400 (PVEEDPDGEL). Over residues 583–603 (GTKEEEEKGNQDQEPESDKQH) the composition is skewed to basic and acidic residues. Basic residues-rich tracts occupy residues 611 to 622 (KAGKKQRKRNKK) and 762 to 776 (KKNQ…RAQQ). Serine 780 bears the Phosphoserine mark. A compositionally biased stretch (polar residues) spans 795 to 809 (LKQQENQSRNCNKPN).

This sequence belongs to the PIH1 family. Kintoun subfamily. Interacts with Pp1alpha-96A, Pp1-87B, Pp1-13C and flw.

Its subcellular location is the cytoplasm. Its function is as follows. Required for cytoplasmic pre-assembly of axonemal dyneins, thereby playing a central role in motility in cilia and flagella. Involved in pre-assembly of dynein arm complexes in the cytoplasm before intraflagellar transport loads them for the ciliary compartment. This is Protein kintoun from Drosophila yakuba (Fruit fly).